We begin with the raw amino-acid sequence, 180 residues long: uncharacterized protein (180 aa).

This sequence belongs to the isochorismatase family.

This is an uncharacterized protein from Bacillus subtilis (strain 168).